The sequence spans 235 residues: MATPSSATSLNVENIVFPSSVKPPGDTNTLFLGGAGVRGMEIQGNFVKFTGIGVYLEDKAIPLLAGKWKGKTAEELVNSVEFFRDIVTGPFKKFTQVTMILPLTGKQYSEKVSEMCVGVWKAHGTYTDADGATIDKFLEVFKDENFPPGASILFTTSPDGSLTISFSKDGMIPEAANIVLENEKLAQAVIESVIGKNGVSPATKQSLASRLSDLMNHFDEKATTDAEPNLSKNGL.

Residues threonine 50 and serine 192 each contribute to the substrate site.

Belongs to the chalcone isomerase family.

The catalysed reaction is a chalcone = a flavanone.. It functions in the pathway secondary metabolite biosynthesis; flavonoid biosynthesis. Catalyzes the intramolecular cyclization of bicyclic chalcones into tricyclic (S)-flavanones. Responsible for the isomerization of 4,2',4',6'-tetrahydroxychalcone (also termed chalcone) into naringenin. The protein is Chalcone--flavanone isomerase 2 (CHI2) of Chrysanthemum morifolium (Florist's daisy).